A 534-amino-acid polypeptide reads, in one-letter code: CTP synthase (534 aa).

The interval 1–265 (MKYIIVTGGV…TTQLMKHLQL (265 aa)) is amidoligase domain. CTP is bound at residue serine 12. A UTP-binding site is contributed by serine 12. Residue 13–18 (GLGKGI) participates in ATP binding. Residue tyrosine 53 participates in L-glutamine binding. Aspartate 70 contributes to the ATP binding site. Residues aspartate 70 and glutamate 140 each contribute to the Mg(2+) site. CTP-binding positions include 147–149 (DIE), 186–191 (KTKPSQ), and lysine 222. Residues 186-191 (KTKPSQ) and lysine 222 each bind UTP. In terms of domain architecture, Glutamine amidotransferase type-1 spans 289–530 (KLAIVGKYTN…VAAMCKYRKE (242 aa)). Residue glycine 352 participates in L-glutamine binding. Cysteine 379 functions as the Nucleophile; for glutamine hydrolysis in the catalytic mechanism. Residues 380–383 (LGMQ), glutamate 403, and arginine 460 each bind L-glutamine. Residues histidine 503 and glutamate 505 contribute to the active site.

The protein belongs to the CTP synthase family. As to quaternary structure, homotetramer.

It carries out the reaction UTP + L-glutamine + ATP + H2O = CTP + L-glutamate + ADP + phosphate + 2 H(+). The catalysed reaction is L-glutamine + H2O = L-glutamate + NH4(+). It catalyses the reaction UTP + NH4(+) + ATP = CTP + ADP + phosphate + 2 H(+). It participates in pyrimidine metabolism; CTP biosynthesis via de novo pathway; CTP from UDP: step 2/2. With respect to regulation, allosterically activated by GTP, when glutamine is the substrate; GTP has no effect on the reaction when ammonia is the substrate. The allosteric effector GTP functions by stabilizing the protein conformation that binds the tetrahedral intermediate(s) formed during glutamine hydrolysis. Inhibited by the product CTP, via allosteric rather than competitive inhibition. In terms of biological role, catalyzes the ATP-dependent amination of UTP to CTP with either L-glutamine or ammonia as the source of nitrogen. Regulates intracellular CTP levels through interactions with the four ribonucleotide triphosphates. This chain is CTP synthase, found in Methanosarcina barkeri (strain Fusaro / DSM 804).